The sequence spans 672 residues: ATP-dependent zinc metalloprotease FtsH 1 (672 aa).

The interval 1–22 (MKKDSESNSSDKSNKEELSTGR) is disordered. At 1–23 (MKKDSESNSSDKSNKEELSTGRR) the chain is on the cytoplasmic side. Residues 24–44 (GGNPMIIALVITVLAAMLFFN) traverse the membrane as a helical segment. The Periplasmic portion of the chain corresponds to 45-141 (QPEPSSLISA…KFSPPDNTAA (97 aa)). Residues 142–162 (ILNLLILVGLPLAIFFFIFMM) traverse the membrane as a helical segment. The Cytoplasmic segment spans residues 163–672 (IRRTRNDMMG…TSNASARRED (510 aa)). Position 237-244 (237-244 (GPPGTGKT)) interacts with ATP. A Zn(2+)-binding site is contributed by H458. Residue E459 is part of the active site. H462 and D534 together coordinate Zn(2+). Residues 642–672 (RLGDEEGKVEQIMAPEGAAERTSNASARRED) are disordered. A compositionally biased stretch (polar residues) spans 662 to 672 (RTSNASARRED).

This sequence in the central section; belongs to the AAA ATPase family. In the C-terminal section; belongs to the peptidase M41 family. Homohexamer. Requires Zn(2+) as cofactor.

The protein resides in the cell inner membrane. Functionally, acts as a processive, ATP-dependent zinc metallopeptidase for both cytoplasmic and membrane proteins. Plays a role in the quality control of integral membrane proteins. This is ATP-dependent zinc metalloprotease FtsH 1 from Rhodopirellula baltica (strain DSM 10527 / NCIMB 13988 / SH1).